A 330-amino-acid polypeptide reads, in one-letter code: 4-epi-cubebol synthase ((2E,6E)-farnesyl diphosphate cyclizing) (330 aa).

2 residues coordinate Mg(2+): D91 and E96. Positions 91 to 96 match the DDXXXE motif motif; that stretch reads DDAFCE. R184 is a substrate binding site. Residues N230 and S234 each contribute to the Mg(2+) site. Residue K237 participates in substrate binding. Position 238 (E238) interacts with Mg(2+). 316–317 is a substrate binding site; sequence RY.

This sequence belongs to the terpene synthase family. Requires Mg(2+) as cofactor.

The catalysed reaction is (2E,6E)-farnesyl diphosphate + H2O = 4-epi-cubebol + diphosphate. The protein operates within secondary metabolite biosynthesis; terpenoid biosynthesis. In terms of biological role, catalyzes the conversion of (2E,6E)-farnesyl diphosphate (FPP) to yield the bicyclic sesquiterpenol 4-epi-cubebol via a 1,10-cyclization, which requires the abstraction of the pyrophosphate from FPP to yield a (E,E)-germacradienyl cation. The only accepted substrate is (2E,6E)-farnesyl diphosphate (FPP). This Streptosporangium roseum (strain ATCC 12428 / DSM 43021 / JCM 3005 / KCTC 9067 / NCIMB 10171 / NRRL 2505 / NI 9100) protein is 4-epi-cubebol synthase ((2E,6E)-farnesyl diphosphate cyclizing).